The sequence spans 193 residues: 3-isopropylmalate dehydratase small subunit (193 aa).

This sequence belongs to the LeuD family. LeuD type 1 subfamily. In terms of assembly, heterodimer of LeuC and LeuD.

It catalyses the reaction (2R,3S)-3-isopropylmalate = (2S)-2-isopropylmalate. The protein operates within amino-acid biosynthesis; L-leucine biosynthesis; L-leucine from 3-methyl-2-oxobutanoate: step 2/4. Functionally, catalyzes the isomerization between 2-isopropylmalate and 3-isopropylmalate, via the formation of 2-isopropylmaleate. This Bacillus cytotoxicus (strain DSM 22905 / CIP 110041 / 391-98 / NVH 391-98) protein is 3-isopropylmalate dehydratase small subunit.